The chain runs to 452 residues: Trigger factor (452 aa).

A PPIase FKBP-type domain is found at 170-256 (DSIVKVDFVE…IKSIKKRDLP (87 aa)).

Belongs to the FKBP-type PPIase family. Tig subfamily.

The protein localises to the cytoplasm. It carries out the reaction [protein]-peptidylproline (omega=180) = [protein]-peptidylproline (omega=0). Its function is as follows. Involved in protein export. Acts as a chaperone by maintaining the newly synthesized protein in an open conformation. Functions as a peptidyl-prolyl cis-trans isomerase. In Borreliella afzelii (strain PKo) (Borrelia afzelii), this protein is Trigger factor.